The primary structure comprises 213 residues: Octanoyltransferase (213 aa).

The 179-residue stretch at 35–213 folds into the BPL/LPL catalytic domain; sequence DKHGDAVLLL…ERHLPTLVGA (179 aa). Substrate-binding positions include 73–80, 145–147, and 158–160; these read RGGKITWH, AIG, and GFS. Cysteine 176 (acyl-thioester intermediate) is an active-site residue.

This sequence belongs to the LipB family.

The protein resides in the cytoplasm. It catalyses the reaction octanoyl-[ACP] + L-lysyl-[protein] = N(6)-octanoyl-L-lysyl-[protein] + holo-[ACP] + H(+). It functions in the pathway protein modification; protein lipoylation via endogenous pathway; protein N(6)-(lipoyl)lysine from octanoyl-[acyl-carrier-protein]: step 1/2. Catalyzes the transfer of endogenously produced octanoic acid from octanoyl-acyl-carrier-protein onto the lipoyl domains of lipoate-dependent enzymes. Lipoyl-ACP can also act as a substrate although octanoyl-ACP is likely to be the physiological substrate. This is Octanoyltransferase from Salinispora arenicola (strain CNS-205).